The sequence spans 230 residues: Stachydrine N-demethylase reductase subunit Stc3 (230 aa).

It belongs to the non-flavoprotein flavin reductase family. In terms of assembly, the system is probably composed of an oxygenase subunit (Stc2) and two reductase subunits (Stc3 and Stc4).

In terms of biological role, reductase involved in the catabolism of stachydrine (L-proline betaine), a source of carbon and nitrogen. Part of a Rieske-type oxygenase system that catalyzes the demethylation of stachydrine to produce N-methyl-L-proline (monomethylproline). This subunit is probably involved in the transfer of electrons from NAD(P)H to the catalytic subunit Stc2. The chain is Stachydrine N-demethylase reductase subunit Stc3 from Rhizobium meliloti (strain 1021) (Ensifer meliloti).